We begin with the raw amino-acid sequence, 115 residues long: Macrophage migration inhibitory factor (115 aa).

P2 functions as the Proton acceptor; via imino nitrogen in the catalytic mechanism. Substrate is bound by residues K33 and I65. K78 carries the post-translational modification N6-acetyllysine; alternate. Position 78 is an N6-succinyllysine; alternate (K78). N98 contributes to the substrate binding site.

This sequence belongs to the MIF family. Homotrimer. Interacts with CD74 and CXCR2 extracellular domain and COPS5. Interacts with the USO1 and BNIPL.

It is found in the secreted. It localises to the cytoplasm. It catalyses the reaction 3-phenylpyruvate = enol-phenylpyruvate. It carries out the reaction L-dopachrome = 5,6-dihydroxyindole-2-carboxylate. Pro-inflammatory cytokine involved in the innate immune response to bacterial pathogens. The expression of MIF at sites of inflammation suggests a role as mediator in regulating the function of macrophages in host defense. Counteracts the anti-inflammatory activity of glucocorticoids. Has phenylpyruvate tautomerase and dopachrome tautomerase activity (in vitro), but the physiological substrate is not known. It is not clear whether the tautomerase activity has any physiological relevance, and whether it is important for cytokine activity. In Mus musculus (Mouse), this protein is Macrophage migration inhibitory factor.